A 126-amino-acid polypeptide reads, in one-letter code: Small ribosomal subunit protein uS13 (126 aa).

A disordered region spans residues 92 to 126 (HRRGLPVRGQRTKTNARTRKGPKKTVAGKKKATRK).

This sequence belongs to the universal ribosomal protein uS13 family. As to quaternary structure, part of the 30S ribosomal subunit. Forms a loose heterodimer with protein S19. Forms two bridges to the 50S subunit in the 70S ribosome.

In terms of biological role, located at the top of the head of the 30S subunit, it contacts several helices of the 16S rRNA. In the 70S ribosome it contacts the 23S rRNA (bridge B1a) and protein L5 of the 50S subunit (bridge B1b), connecting the 2 subunits; these bridges are implicated in subunit movement. Contacts the tRNAs in the A and P-sites. In Deinococcus deserti (strain DSM 17065 / CIP 109153 / LMG 22923 / VCD115), this protein is Small ribosomal subunit protein uS13.